We begin with the raw amino-acid sequence, 371 residues long: Transaldolase (371 aa).

Lys-140 functions as the Schiff-base intermediate with substrate in the catalytic mechanism.

It belongs to the transaldolase family. Type 2 subfamily.

It localises to the cytoplasm. The enzyme catalyses D-sedoheptulose 7-phosphate + D-glyceraldehyde 3-phosphate = D-erythrose 4-phosphate + beta-D-fructose 6-phosphate. The protein operates within carbohydrate degradation; pentose phosphate pathway; D-glyceraldehyde 3-phosphate and beta-D-fructose 6-phosphate from D-ribose 5-phosphate and D-xylulose 5-phosphate (non-oxidative stage): step 2/3. Its function is as follows. Transaldolase is important for the balance of metabolites in the pentose-phosphate pathway. The chain is Transaldolase from Frankia alni (strain DSM 45986 / CECT 9034 / ACN14a).